The sequence spans 272 residues: NH(3)-dependent NAD(+) synthetase (272 aa).

An ATP-binding site is contributed by Gly45–Ser52. Asp51 contacts Mg(2+). A deamido-NAD(+)-binding site is contributed by Arg138. Thr158 is an ATP binding site. Glu163 is a binding site for Mg(2+). Residues Lys171 and Asp178 each contribute to the deamido-NAD(+) site. Residues Lys187 and Thr209 each contribute to the ATP site. His258–Lys259 is a binding site for deamido-NAD(+).

It belongs to the NAD synthetase family. As to quaternary structure, homodimer.

It catalyses the reaction deamido-NAD(+) + NH4(+) + ATP = AMP + diphosphate + NAD(+) + H(+). It participates in cofactor biosynthesis; NAD(+) biosynthesis; NAD(+) from deamido-NAD(+) (ammonia route): step 1/1. Catalyzes the ATP-dependent amidation of deamido-NAD to form NAD. Uses ammonia as a nitrogen source. In Bacillus cereus (strain Q1), this protein is NH(3)-dependent NAD(+) synthetase.